The primary structure comprises 583 residues: Undecaprenyl phosphate-alpha-4-amino-4-deoxy-L-arabinose arabinosyl transferase 2 (583 aa).

The tract at residues 1-20 (MTSRIQMHRTSPPPAYGTSA) is disordered. 12 helical membrane-spanning segments follow: residues 42 to 62 (LLLVAFGLFYLLPLTSHGLWI), 113 to 135 (LFGVRIASALSTGLSVLLAYLIT), 145 to 165 (SFAAALLYMSFGLIAGQAGYS), 166 to 186 (NLDPQFTLWVNLSLVALWFAL), 209 to 229 (FMTKGFLAWLLPVLIALPYMI), 241 to 261 (GLVAVLVAIGISLPWVLSIHA), 290 to 310 (WWFYLPLLVASSLPWAALLPG), 321 to 341 (QAPTGFLLLWFLLPLAFFSLS), 345 to 365 (LPTYIMPCLLPLAVLMGSALI), 380 to 400 (SLLNLLIGVAAMVALLYIQLT), 409 to 429 (MLGLSLVFIMLMGWIIANLLP), and 440 to 460 (PALGIWLLVALLPAGMPGFIV).

It belongs to the glycosyltransferase 83 family.

The protein resides in the cell inner membrane. It catalyses the reaction 4-amino-4-deoxy-alpha-L-arabinopyranosyl di-trans,octa-cis-undecaprenyl phosphate + lipid IVA = lipid IIA + di-trans,octa-cis-undecaprenyl phosphate.. It functions in the pathway lipopolysaccharide metabolism; 4-amino-4-deoxy-beta-L-arabinose-lipid A biosynthesis. Catalyzes the transfer of the L-Ara4N moiety of the glycolipid undecaprenyl phosphate-alpha-L-Ara4N to lipid A. The modified arabinose is attached to lipid A and is required for resistance to polymyxin and cationic antimicrobial peptides. In Pseudomonas fluorescens (strain ATCC BAA-477 / NRRL B-23932 / Pf-5), this protein is Undecaprenyl phosphate-alpha-4-amino-4-deoxy-L-arabinose arabinosyl transferase 2.